Reading from the N-terminus, the 141-residue chain is Nucleoside diphosphate kinase (141 aa).

ATP contacts are provided by K11, F59, R87, T93, R104, and N114. The active-site Pros-phosphohistidine intermediate is H117.

The protein belongs to the NDK family. As to quaternary structure, homotetramer. Mg(2+) is required as a cofactor.

The protein localises to the cytoplasm. The enzyme catalyses a 2'-deoxyribonucleoside 5'-diphosphate + ATP = a 2'-deoxyribonucleoside 5'-triphosphate + ADP. The catalysed reaction is a ribonucleoside 5'-diphosphate + ATP = a ribonucleoside 5'-triphosphate + ADP. Functionally, major role in the synthesis of nucleoside triphosphates other than ATP. The ATP gamma phosphate is transferred to the NDP beta phosphate via a ping-pong mechanism, using a phosphorylated active-site intermediate. This is Nucleoside diphosphate kinase from Paraburkholderia phytofirmans (strain DSM 17436 / LMG 22146 / PsJN) (Burkholderia phytofirmans).